We begin with the raw amino-acid sequence, 174 residues long: Flavodoxin 1 (174 aa).

The 165-residue stretch at 4-168 (IGIFYGSSSG…RLERWIAVLQ (165 aa)) folds into the Flavodoxin-like domain. FMN contacts are provided by residues 10-14 (SSSGV) and 89-122 (LFGA…ALVG).

Requires FMN as cofactor.

Functionally, flavodoxins are low-potential electron donors to a number of redox enzymes. AvFld 1 is able to donate electrons to the assimilatory nitrate reductase of A.vinelandii to catalyze the reduction of nitrate to nitrite. The sequence is that of Flavodoxin 1 from Azotobacter vinelandii (strain DJ / ATCC BAA-1303).